Consider the following 343-residue polypeptide: Small ribosomal subunit biogenesis GTPase RsgA (343 aa).

A CP-type G domain is found at 116–275 (RGQLKPVAAN…LIDSPGIREF (160 aa)). GTP is bound by residues 163–166 (NKAD) and 217–225 (GQSGVGKSS). The Zn(2+) site is built by C299, C304, H306, and C312.

It belongs to the TRAFAC class YlqF/YawG GTPase family. RsgA subfamily. In terms of assembly, monomer. Associates with 30S ribosomal subunit, binds 16S rRNA. Zn(2+) is required as a cofactor.

It is found in the cytoplasm. Its function is as follows. One of several proteins that assist in the late maturation steps of the functional core of the 30S ribosomal subunit. Helps release RbfA from mature subunits. May play a role in the assembly of ribosomal proteins into the subunit. Circularly permuted GTPase that catalyzes slow GTP hydrolysis, GTPase activity is stimulated by the 30S ribosomal subunit. The polypeptide is Small ribosomal subunit biogenesis GTPase RsgA (Azotobacter vinelandii (strain DJ / ATCC BAA-1303)).